We begin with the raw amino-acid sequence, 56 residues long: Aspartyl-phosphate phosphatase YisI (56 aa).

The protein belongs to the spo0E family.

Its function is as follows. Aspartyl-phosphate phosphatase which specifically dephosphorylates the sporulation transcription factor Spo0A-P and negatively regulates the sporulation initiation pathway in order to control the proper timing of sporulation. The protein is Aspartyl-phosphate phosphatase YisI (yisI) of Bacillus subtilis (strain 168).